Consider the following 120-residue polypeptide: Large ribosomal subunit protein uL14 (120 aa).

Belongs to the universal ribosomal protein uL14 family. As to quaternary structure, part of the 50S ribosomal subunit. Forms a cluster with proteins L3 and L19. In the 70S ribosome, L14 and L19 interact and together make contacts with the 16S rRNA in bridges B5 and B8.

Functionally, binds to 23S rRNA. Forms part of two intersubunit bridges in the 70S ribosome. The chain is Large ribosomal subunit protein uL14 from Aster yellows witches'-broom phytoplasma (strain AYWB).